Reading from the N-terminus, the 134-residue chain is ATP synthase epsilon chain (134 aa).

The protein belongs to the ATPase epsilon chain family. F-type ATPases have 2 components, CF(1) - the catalytic core - and CF(0) - the membrane proton channel. CF(1) has five subunits: alpha(3), beta(3), gamma(1), delta(1), epsilon(1). CF(0) has three main subunits: a, b and c.

It is found in the cell membrane. Its function is as follows. Produces ATP from ADP in the presence of a proton gradient across the membrane. In Listeria monocytogenes serotype 4a (strain HCC23), this protein is ATP synthase epsilon chain.